The primary structure comprises 141 residues: Putative pre-16S rRNA nuclease (141 aa).

The protein belongs to the YqgF nuclease family.

The protein localises to the cytoplasm. Functionally, could be a nuclease involved in processing of the 5'-end of pre-16S rRNA. This is Putative pre-16S rRNA nuclease from Aliivibrio fischeri (strain ATCC 700601 / ES114) (Vibrio fischeri).